The sequence spans 465 residues: Na(+)-translocating NADH-quinone reductase subunit A (465 aa).

The protein belongs to the NqrA family. As to quaternary structure, composed of six subunits; NqrA, NqrB, NqrC, NqrD, NqrE and NqrF.

It carries out the reaction a ubiquinone + n Na(+)(in) + NADH + H(+) = a ubiquinol + n Na(+)(out) + NAD(+). Functionally, NQR complex catalyzes the reduction of ubiquinone-1 to ubiquinol by two successive reactions, coupled with the transport of Na(+) ions from the cytoplasm to the periplasm. NqrA to NqrE are probably involved in the second step, the conversion of ubisemiquinone to ubiquinol. The chain is Na(+)-translocating NADH-quinone reductase subunit A from Chlamydia trachomatis serovar L2b (strain UCH-1/proctitis).